The chain runs to 473 residues: B box and SPRY domain-containing protein (473 aa).

Residues 1–69 (MSADVSGTES…PKQGSERSQL (69 aa)) form a disordered region. Pro residues predominate over residues 35 to 51 (KPGPGPEPRPESGPEPG). The B box-type zinc-finger motif lies at 65–113 (ERSQLCPEHFEPLSWFCLSERRPVCATCAGFGGRCHRHRIRRAEEHAEE). In terms of domain architecture, B30.2/SPRY spans 259–455 (SPLLTQLWAA…ISIVRGPLAT (197 aa)).

As to quaternary structure, interacts with YWHAZ/14-3-3 protein zeta. Interacts with TRPV5 and TRPV6. As to expression, according to PubMed:10978534, testis-specific. According to PubMed:16371431, broadly expressed.

The protein resides in the cytoplasm. It is found in the membrane. Its function is as follows. May regulate epithelial calcium transport by inhibiting TRPV5 activity. This is B box and SPRY domain-containing protein (Bspry) from Mus musculus (Mouse).